A 232-amino-acid polypeptide reads, in one-letter code: Ribonuclease 3 (232 aa).

The RNase III domain occupies 6–133; it reads FNDIENRLGV…VIAAVYLDKG (128 aa). Glu46 is a Mg(2+) binding site. The active site involves Asp50. Residues Asp119 and Glu122 each coordinate Mg(2+). Glu122 is an active-site residue. The region spanning 160–229 is the DRBM domain; that stretch reads DFKTKLQELL…AKEALKRLEK (70 aa).

Belongs to the ribonuclease III family. Homodimer. Requires Mg(2+) as cofactor.

The protein localises to the cytoplasm. The enzyme catalyses Endonucleolytic cleavage to 5'-phosphomonoester.. Its function is as follows. Digests double-stranded RNA. Involved in the processing of primary rRNA transcript to yield the immediate precursors to the large and small rRNAs (23S and 16S). Processes some mRNAs, and tRNAs when they are encoded in the rRNA operon. Processes pre-crRNA and tracrRNA of type II CRISPR loci if present in the organism. The chain is Ribonuclease 3 from Clostridium botulinum (strain Alaska E43 / Type E3).